The primary structure comprises 156 residues: Ribosomal RNA large subunit methyltransferase H (156 aa).

Residues Leu-73, Gly-104, and 123 to 128 (IGPLTL) each bind S-adenosyl-L-methionine.

Belongs to the RNA methyltransferase RlmH family. Homodimer.

The protein resides in the cytoplasm. It catalyses the reaction pseudouridine(1915) in 23S rRNA + S-adenosyl-L-methionine = N(3)-methylpseudouridine(1915) in 23S rRNA + S-adenosyl-L-homocysteine + H(+). Specifically methylates the pseudouridine at position 1915 (m3Psi1915) in 23S rRNA. The protein is Ribosomal RNA large subunit methyltransferase H of Stenotrophomonas maltophilia (strain K279a).